Here is a 231-residue protein sequence, read N- to C-terminus: Adenosylcobinamide-GDP ribazoletransferase (231 aa).

The next 5 membrane-spanning stretches (helical) occupy residues 28–48 (LWLF…PHFI), 97–117 (TGAG…TLLY), 121–141 (FWEI…LMLL), 162–182 (VFIG…ESLA), and 209–229 (VIGS…TIAG).

It belongs to the CobS family. Requires Mg(2+) as cofactor.

Its subcellular location is the cell membrane. It carries out the reaction alpha-ribazole + adenosylcob(III)inamide-GDP = adenosylcob(III)alamin + GMP + H(+). The catalysed reaction is alpha-ribazole 5'-phosphate + adenosylcob(III)inamide-GDP = adenosylcob(III)alamin 5'-phosphate + GMP + H(+). Its pathway is cofactor biosynthesis; adenosylcobalamin biosynthesis; adenosylcobalamin from cob(II)yrinate a,c-diamide: step 7/7. Its function is as follows. Joins adenosylcobinamide-GDP and alpha-ribazole to generate adenosylcobalamin (Ado-cobalamin). Also synthesizes adenosylcobalamin 5'-phosphate from adenosylcobinamide-GDP and alpha-ribazole 5'-phosphate. The chain is Adenosylcobinamide-GDP ribazoletransferase (cobS2) from Archaeoglobus fulgidus (strain ATCC 49558 / DSM 4304 / JCM 9628 / NBRC 100126 / VC-16).